Reading from the N-terminus, the 381-residue chain is E3 ubiquitin-protein ligase RNF13 (381 aa).

An N-terminal signal peptide occupies residues 1–34; sequence MLLSIGMLMLSATQVYTILTVQLFAFLNLLPVEA. Topologically, residues 35-182 are lumenal; that stretch reads DILAYNFENA…VPEFSLPLEY (148 aa). In terms of domain architecture, PA spans 65–160; it reads KGFLINSKPE…GESSANSLKD (96 aa). An N-linked (GlcNAc...) asparagine glycan is attached at asparagine 88. Residues 183 to 203 form a helical membrane-spanning segment; it reads YLIPFLIIVGICLILIVIFMI. Topologically, residues 204–381 are cytoplasmic; the sequence is TKFVQDRHRA…ERDYNIANTV (178 aa). The RING-type; atypical zinc-finger motif lies at 240-282; it reads CAICLDEYEDGDKLRILPCSHAYHCKCVDPWLTKTKKTCPVCK. The interval 285 to 381 is disordered; that stretch reads VVPSQGDSDS…ERDYNIANTV (97 aa). 2 stretches are compositionally biased toward acidic residues: residues 292 to 304 and 339 to 357; these read SDSD…EENE and SDYE…AENE.

As to quaternary structure, interacts with ERN1. In terms of processing, autoubiquitinated. As to expression, widely expressed (at protein level). In normal pancreas, expressed in islets, but not in ducts, nor in acini (at protein level).

Its subcellular location is the endoplasmic reticulum membrane. The protein localises to the late endosome membrane. It localises to the lysosome membrane. It is found in the nucleus inner membrane. It catalyses the reaction S-ubiquitinyl-[E2 ubiquitin-conjugating enzyme]-L-cysteine + [acceptor protein]-L-lysine = [E2 ubiquitin-conjugating enzyme]-L-cysteine + N(6)-ubiquitinyl-[acceptor protein]-L-lysine.. It participates in protein modification; protein ubiquitination. Functionally, E3 ubiquitin-protein ligase that regulates cell proliferation. Involved in apoptosis regulation. Mediates ER stress-induced activation of JNK signaling pathway and apoptosis by promoting ERN1 activation and splicing of XBP1 mRNA. Also involved in protein trafficking and localization. This Homo sapiens (Human) protein is E3 ubiquitin-protein ligase RNF13.